A 276-amino-acid polypeptide reads, in one-letter code: Diaminopimelate epimerase (276 aa).

Positions 13, 46, and 66 each coordinate substrate. Cys-75 acts as the Proton donor in catalysis. Residues 76–77, Asn-159, Asn-192, and 210–211 contribute to the substrate site; these read GN and ER. Cys-219 serves as the catalytic Proton acceptor. 220 to 221 contributes to the substrate binding site; the sequence is GS.

This sequence belongs to the diaminopimelate epimerase family. In terms of assembly, homodimer.

The protein resides in the cytoplasm. The catalysed reaction is (2S,6S)-2,6-diaminopimelate = meso-2,6-diaminopimelate. Its pathway is amino-acid biosynthesis; L-lysine biosynthesis via DAP pathway; DL-2,6-diaminopimelate from LL-2,6-diaminopimelate: step 1/1. Catalyzes the stereoinversion of LL-2,6-diaminopimelate (L,L-DAP) to meso-diaminopimelate (meso-DAP), a precursor of L-lysine and an essential component of the bacterial peptidoglycan. The chain is Diaminopimelate epimerase from Aliivibrio fischeri (strain ATCC 700601 / ES114) (Vibrio fischeri).